The sequence spans 51 residues: Mitochondrial import receptor subunit TOM5 homolog (51 aa).

Methionine 1 is modified (N-acetylmethionine). Lysine 10 is covalently cross-linked (Glycyl lysine isopeptide (Lys-Gly) (interchain with G-Cter in SUMO2)). The chain crosses the membrane as a helical span at residues 27–45 (SIRNFLIYVALLRVTPFIL).

This sequence belongs to the Tom5 family. Forms part of the preprotein translocase complex of the outer mitochondrial membrane (TOM complex) which consists of at least 7 different proteins (TOMM5, TOMM6, TOMM7, TOMM20, TOMM22, TOMM40 and TOMM70).

The protein localises to the mitochondrion outer membrane. This Bos taurus (Bovine) protein is Mitochondrial import receptor subunit TOM5 homolog.